The following is a 216-amino-acid chain: Ribosomal RNA small subunit methyltransferase G (216 aa).

S-adenosyl-L-methionine-binding positions include G81, F86, 130 to 131 (AE), and R144.

This sequence belongs to the methyltransferase superfamily. RNA methyltransferase RsmG family.

It is found in the cytoplasm. The catalysed reaction is guanosine(527) in 16S rRNA + S-adenosyl-L-methionine = N(7)-methylguanosine(527) in 16S rRNA + S-adenosyl-L-homocysteine. Its function is as follows. Specifically methylates the N7 position of guanine in position 527 of 16S rRNA. The sequence is that of Ribosomal RNA small subunit methyltransferase G from Rhodospirillum centenum (strain ATCC 51521 / SW).